Consider the following 371-residue polypeptide: 4-hydroxy-3-methylbut-2-en-1-yl diphosphate synthase (flavodoxin) (371 aa).

Cysteine 269, cysteine 272, cysteine 304, and glutamate 311 together coordinate [4Fe-4S] cluster.

This sequence belongs to the IspG family. Requires [4Fe-4S] cluster as cofactor.

It carries out the reaction (2E)-4-hydroxy-3-methylbut-2-enyl diphosphate + oxidized [flavodoxin] + H2O + 2 H(+) = 2-C-methyl-D-erythritol 2,4-cyclic diphosphate + reduced [flavodoxin]. The protein operates within isoprenoid biosynthesis; isopentenyl diphosphate biosynthesis via DXP pathway; isopentenyl diphosphate from 1-deoxy-D-xylulose 5-phosphate: step 5/6. In terms of biological role, converts 2C-methyl-D-erythritol 2,4-cyclodiphosphate (ME-2,4cPP) into 1-hydroxy-2-methyl-2-(E)-butenyl 4-diphosphate. The chain is 4-hydroxy-3-methylbut-2-en-1-yl diphosphate synthase (flavodoxin) from Acinetobacter baylyi (strain ATCC 33305 / BD413 / ADP1).